Consider the following 473-residue polypeptide: MPAIAEPYRIKMVEPITMTTREQREAAIRAAGYNTFLLRSDDVYIDLLTDSGTSAMSDRQWSAMMMGDEAYAGARSFDHLVESVRENYGFPLVCPTHQGRGAEHLISKILITPGQHVPGNMYFTTTRVHQELAGGTFHDVIIDEAHDPASRHPFKGNVDLDKFQALIDEVGADQIAYINVAVTVNMAGGQPVSMANIRAVREICDRYGIILWSDATRLAENAWFIQEREDGYAGRPVAEIVREMLSHFDGITMSGKKDCLVNIGGFLAMRDEAILTKARELVVVYEGMPTYGGLAGRDLDAMAVGLREALDDDYLTHRIGQVRYLGERLQAAGVPIVEPIGGHAVFIDAAAFLDHLSQDELPAQTLAAEIFLDSGVRSMERGIVSAGRDADGNNRYPKLELVRLTIPRRVYTNSHMDVVADSVIRVFQRRREIQGLTFVYESPTLRFFTSRFEPLAAEAALEEGRPEPALAGA.

At lysine 257 the chain carries N6-(pyridoxal phosphate)lysine.

It belongs to the beta-eliminating lyase family. In terms of assembly, homotetramer. It depends on pyridoxal 5'-phosphate as a cofactor.

It catalyses the reaction L-tyrosine + H2O = phenol + pyruvate + NH4(+). The protein is Tyrosine phenol-lyase of Intrasporangium calvum (strain ATCC 23552 / DSM 43043 / JCM 3097 / NBRC 12989 / NCIMB 10167 / NRRL B-3866 / 7 KIP).